A 109-amino-acid chain; its full sequence is Ycf20-like protein (109 aa).

The protein belongs to the ycf20 family.

The sequence is that of Ycf20-like protein from Synechocystis sp. (strain ATCC 27184 / PCC 6803 / Kazusa).